Here is a 267-residue protein sequence, read N- to C-terminus: Interleukin-2 receptor subunit alpha (267 aa).

Residues 1–21 (MEPHLLMLGFLSFTIVPGCWA) form the signal peptide. In terms of domain architecture, Sushi 1 spans 22–79 (ELCLYDPPEVPNATFKALSYKNGTILNCECKRGFRRLNELVYMACLGNSWSNNCQCTS). Residues 22–235 (ELCLYDPPEV…ETFVFTKEYQ (214 aa)) are Extracellular-facing. Cystine bridges form between Cys24/Cys66, Cys49/Cys75, and Cys51/Cys77. 2 N-linked (GlcNAc...) asparagine glycosylation sites follow: Asn33 and Asn43. Polar residues predominate over residues 82–93 (HDNSREQVTPQP). The segment at 82–108 (HDNSREQVTPQPEGQKEQQTTDTQKST) is disordered. Low complexity predominate over residues 98–108 (EQQTTDTQKST). The 64-residue stretch at 118 to 181 (GHCREPPPWR…WTHPQLTCVD (64 aa)) folds into the Sushi 2 domain. Disulfide bonds link Cys120/Cys163 and Cys147/Cys179. The tract at residues 191 to 215 (SEESQGSRNSFPESEASCPTPNTDF) is disordered. A compositionally biased stretch (polar residues) spans 192–215 (EESQGSRNSFPESEASCPTPNTDF). Residues 236–256 (VAVASCIFLLLSILLLSGFTW) traverse the membrane as a helical segment. Residues 257–267 (QHRWRKSRRTI) lie on the Cytoplasmic side of the membrane.

Non-covalent dimer of an alpha and a beta subunit. IL2R exists in 3 different forms: a high affinity dimer, an intermediate affinity monomer (beta subunit), and a low affinity monomer (alpha subunit). The high and intermediate affinity forms also associate with a gamma subunit.

It localises to the membrane. Its function is as follows. Receptor for interleukin-2. The receptor is involved in the regulation of immune tolerance by controlling regulatory T cells (TREGs) activity. TREGs suppress the activation and expansion of autoreactive T-cells. This Rattus norvegicus (Rat) protein is Interleukin-2 receptor subunit alpha (Il2ra).